The following is an 88-amino-acid chain: MSLQADFDKAAKDVRKLKTRPDDEELKELYGLYKQSVIGDIDIECPALLDLKGKAKWEAWNLQKGLSKEDAMNAYISKAKELIEKYGI.

Residues 3 to 88 (LQADFDKAAK…AKELIEKYGI (86 aa)) form the ACB domain. An acyl-CoA contacts are provided by residues Arg-15, 30 to 34 (YGLYK), Lys-56, and Tyr-75.

The protein belongs to the ACBD7 family.

In terms of biological role, binds medium- and long-chain acyl-CoA esters. The sequence is that of Acyl-CoA-binding domain-containing protein 7 (ACBD7) from Bos taurus (Bovine).